Here is a 361-residue protein sequence, read N- to C-terminus: Small ribosomal subunit protein mS46 (361 aa).

The transit peptide at 1-14 (MRSSMFRCVSRAHY) directs the protein to the mitochondrion. Residues 37-99 (ASSNALKLDK…SDSVRANKQQ (63 aa)) are disordered. Over residues 43–52 (KLDKMKEGRM) the composition is skewed to basic and acidic residues. Over residues 59 to 68 (GNQNRNSMNN) the composition is skewed to low complexity. Positions 69–91 (KESRGREGNQGERNMRLKNRSSD) are enriched in basic and acidic residues.

The protein belongs to the mitochondrion-specific ribosomal protein mS46 family. Component of the mitochondrial small ribosomal subunit (mt-SSU). Mature yeast 74S mitochondrial ribosomes consist of a small (37S) and a large (54S) subunit. The 37S small subunit contains a 15S ribosomal RNA (15S mt-rRNA) and 34 different proteins. The 54S large subunit contains a 21S rRNA (21S mt-rRNA) and 46 different proteins.

It is found in the mitochondrion. Component of the mitochondrial ribosome (mitoribosome), a dedicated translation machinery responsible for the synthesis of mitochondrial genome-encoded proteins, including at least some of the essential transmembrane subunits of the mitochondrial respiratory chain. The mitoribosomes are attached to the mitochondrial inner membrane and translation products are cotranslationally integrated into the membrane. The polypeptide is Small ribosomal subunit protein mS46 (RSM28) (Saccharomyces cerevisiae (strain ATCC 204508 / S288c) (Baker's yeast)).